Here is a 122-residue protein sequence, read N- to C-terminus: Large ribosomal subunit protein uL14 (122 aa).

The protein belongs to the universal ribosomal protein uL14 family. In terms of assembly, part of the 50S ribosomal subunit. Forms a cluster with proteins L3 and L19. In the 70S ribosome, L14 and L19 interact and together make contacts with the 16S rRNA in bridges B5 and B8.

Functionally, binds to 23S rRNA. Forms part of two intersubunit bridges in the 70S ribosome. The polypeptide is Large ribosomal subunit protein uL14 (Mycobacterium ulcerans (strain Agy99)).